A 405-amino-acid chain; its full sequence is tRNA N6-adenosine threonylcarbamoyltransferase, mitochondrial (405 aa).

The transit peptide at 1–19 (MAKYISNLSRIAVVRGRVS) directs the protein to the mitochondrion. A divalent metal cation contacts are provided by His138 and His142. Residues 160-164 (LISGG), Asp193, Gly213, Glu217, 320-321 (SN), and Thr348 each bind substrate. Residue Asp349 coordinates a divalent metal cation.

Belongs to the KAE1 / TsaD family. Monomer. Requires a divalent metal cation as cofactor.

The protein localises to the mitochondrion. The enzyme catalyses L-threonylcarbamoyladenylate + adenosine(37) in tRNA = N(6)-L-threonylcarbamoyladenosine(37) in tRNA + AMP + H(+). In terms of biological role, required for the formation of a threonylcarbamoyl group on adenosine at position 37 (t(6)A37) in mitochondrial tRNAs that read codons beginning with adenine. Probably involved in the transfer of the threonylcarbamoyl moiety of threonylcarbamoyl-AMP (TC-AMP) to the N6 group of A37. Involved in mitochondrial genome maintenance. In Xenopus tropicalis (Western clawed frog), this protein is tRNA N6-adenosine threonylcarbamoyltransferase, mitochondrial.